We begin with the raw amino-acid sequence, 119 residues long: Large ribosomal subunit protein uL22 (119 aa).

It belongs to the universal ribosomal protein uL22 family. In terms of assembly, part of the 50S ribosomal subunit.

This protein binds specifically to 23S rRNA; its binding is stimulated by other ribosomal proteins, e.g. L4, L17, and L20. It is important during the early stages of 50S assembly. It makes multiple contacts with different domains of the 23S rRNA in the assembled 50S subunit and ribosome. Functionally, the globular domain of the protein is located near the polypeptide exit tunnel on the outside of the subunit, while an extended beta-hairpin is found that lines the wall of the exit tunnel in the center of the 70S ribosome. In Rickettsia typhi (strain ATCC VR-144 / Wilmington), this protein is Large ribosomal subunit protein uL22.